The sequence spans 508 residues: Photosystem II CP47 reaction center protein (508 aa).

Transmembrane regions (helical) follow at residues 21 to 36 (AVHIMHTALVAGWAGS), 101 to 115 (IVFSGLCFLAAIWHW), 140 to 156 (GIHLFLAGLACFGFGAF), 203 to 218 (IAAGTLGILAGLFHLS), 237 to 252 (VLSSSIAAVFFAAFVV), and 457 to 472 (SFALLFFFGHIWHGAR).

This sequence belongs to the PsbB/PsbC family. PsbB subfamily. In terms of assembly, PSII is composed of 1 copy each of membrane proteins PsbA, PsbB, PsbC, PsbD, PsbE, PsbF, PsbH, PsbI, PsbJ, PsbK, PsbL, PsbM, PsbT, PsbX, PsbY, PsbZ, Psb30/Ycf12, at least 3 peripheral proteins of the oxygen-evolving complex and a large number of cofactors. It forms dimeric complexes. Binds multiple chlorophylls. PSII binds additional chlorophylls, carotenoids and specific lipids. serves as cofactor.

Its subcellular location is the plastid. The protein localises to the chloroplast thylakoid membrane. Functionally, one of the components of the core complex of photosystem II (PSII). It binds chlorophyll and helps catalyze the primary light-induced photochemical processes of PSII. PSII is a light-driven water:plastoquinone oxidoreductase, using light energy to abstract electrons from H(2)O, generating O(2) and a proton gradient subsequently used for ATP formation. This is Photosystem II CP47 reaction center protein from Daucus carota (Wild carrot).